The chain runs to 279 residues: Undecaprenyl-diphosphatase (279 aa).

8 consecutive transmembrane segments (helical) span residues 2-22, 44-64, 85-105, 113-133, 163-183, 188-208, 223-243, and 255-275; these read LIIE…TEWL, AFIE…VMLI, WQLW…AVPL, FYFM…FIWI, VLSI…AIIL, TVAA…YSGL, AQVL…LLAI, and FTIF…YSFF.

This sequence belongs to the UppP family.

The protein localises to the cell membrane. It catalyses the reaction di-trans,octa-cis-undecaprenyl diphosphate + H2O = di-trans,octa-cis-undecaprenyl phosphate + phosphate + H(+). Functionally, catalyzes the dephosphorylation of undecaprenyl diphosphate (UPP). Confers resistance to bacitracin. The sequence is that of Undecaprenyl-diphosphatase from Streptococcus pyogenes serotype M28 (strain MGAS6180).